Here is a 97-residue protein sequence, read N- to C-terminus: MMSAHKYELMFIADPELDERGLKKLTEQYLELVTKEGGSFDEPDYWGRRKLAYEIAGKTEGNYVVVKYTAEPATSDELDRVLNLNESVIRTKILRKG.

It belongs to the bacterial ribosomal protein bS6 family.

Its function is as follows. Binds together with bS18 to 16S ribosomal RNA. The protein is Small ribosomal subunit protein bS6 of Bifidobacterium longum (strain NCC 2705).